The primary structure comprises 502 residues: Alpha-ketoglutarate-dependent dioxygenase FTO (502 aa).

Residues 32 to 324 (TPKDDEFYQQ…SSTHRVAECS (293 aa)) are fe2OG dioxygenase domain. The substrate site is built by Arg96 and Tyr108. Asn202 serves as a coordination point for 2-oxoglutarate. Positions 210–221 (PYLKEEPYFGMG) are loop L1; predicted to block binding of double-stranded DNA or RNA. Lys213 bears the N6-acetyllysine mark. His228 and Asp230 together coordinate Fe cation. 228-231 (HHDE) provides a ligand contact to substrate. Tyr292 contacts 2-oxoglutarate. A Fe cation-binding site is contributed by His304. Residues 313–315 (RFS), Thr317, and Arg319 each bind 2-oxoglutarate.

The protein belongs to the fto family. Monomer. May also exist as homodimer. Fe(2+) serves as cofactor. As to expression, ubiquitous. Highly expressed in teeth and weakly in bone.

Its subcellular location is the nucleus. It localises to the nucleus speckle. The protein localises to the cytoplasm. It catalyses the reaction a 5'-end (N(7)-methyl 5'-triphosphoguanosine)-(N(6),2'-O-dimethyladenosine) in mRNA + 2-oxoglutarate + O2 = a 5'-end (N(7)-methyl 5'-triphosphoguanosine)-(2'-O-methyladenosine) in mRNA + formaldehyde + succinate + CO2. The enzyme catalyses an N(6)-methyladenosine in mRNA + 2-oxoglutarate + O2 = an adenosine in mRNA + formaldehyde + succinate + CO2. It carries out the reaction N(6)-methyladenosine in U6 snRNA + 2-oxoglutarate + O2 = adenosine in U6 snRNA + formaldehyde + succinate + CO2. The catalysed reaction is a 5'-end (N(7)-methyl 5'-triphosphoguanosine)-(N(6),2'-O-dimethyladenosine) in U6 snRNA + 2-oxoglutarate + O2 = a 5'-end (N(7)-methyl 5'-triphosphoguanosine)-(2'-O-methyladenosine) in U6 snRNA + formaldehyde + succinate + CO2. It catalyses the reaction an N(1)-methyladenosine in tRNA + 2-oxoglutarate + O2 = an adenosine in tRNA + formaldehyde + succinate + CO2. With respect to regulation, activated by ascorbate. Inhibited by N-oxalylglycine, fumarate and succinate. Its function is as follows. RNA demethylase that mediates oxidative demethylation of different RNA species, such as mRNAs, tRNAs and snRNAs, and acts as a regulator of fat mass, adipogenesis and energy homeostasis. Specifically demethylates N(6)-methyladenosine (m6A) RNA, the most prevalent internal modification of messenger RNA (mRNA) in higher eukaryotes. M6A demethylation by FTO affects mRNA expression and stability. Also able to demethylate m6A in U6 small nuclear RNA (snRNA). Mediates demethylation of N(6),2'-O-dimethyladenosine cap (m6A(m)), by demethylating the N(6)-methyladenosine at the second transcribed position of mRNAs and U6 snRNA. Demethylation of m6A(m) in the 5'-cap by FTO affects mRNA stability by promoting susceptibility to decapping. Also acts as a tRNA demethylase by removing N(1)-methyladenine from various tRNAs. Has no activity towards 1-methylguanine. Has no detectable activity towards double-stranded DNA. Also able to repair alkylated DNA and RNA by oxidative demethylation: demethylates single-stranded RNA containing 3-methyluracil, single-stranded DNA containing 3-methylthymine and has low demethylase activity towards single-stranded DNA containing 1-methyladenine or 3-methylcytosine. Ability to repair alkylated DNA and RNA is however unsure in vivo. Involved in the regulation of fat mass, adipogenesis and body weight, thereby contributing to the regulation of body size and body fat accumulation. Involved in the regulation of thermogenesis and the control of adipocyte differentiation into brown or white fat cells. Regulates activity of the dopaminergic midbrain circuitry via its ability to demethylate m6A in mRNAs. The sequence is that of Alpha-ketoglutarate-dependent dioxygenase FTO from Rattus norvegicus (Rat).